We begin with the raw amino-acid sequence, 381 residues long: D-rhamnosyltransferase WbpZ (381 aa).

Glu19, His116, Lys206, and Val252 together coordinate substrate.

This sequence belongs to the glycosyltransferase group 1 family. Glycosyltransferase 4 subfamily.

It localises to the cytoplasm. It carries out the reaction GDP-alpha-D-rhamnose + N-acetyl-alpha-D-glucosaminyl-di-trans,octa-cis-undecaprenyl diphosphate = alpha-D-rhamnosyl-(1-&gt;3)-N-acetyl-alpha-D-glucosaminyl-1-diphospho-di-trans,octa-cis-undecaprenol + GDP + H(+). The enzyme catalyses GDP-alpha-D-rhamnose + N-acetyl-alpha-D-galactosaminyl-di-trans,octa-cis-undecaprenyl diphosphate = alpha-D-rhamnosyl-(1-&gt;3)-N-acetyl-alpha-D-galactosaminyl-1-diphospho-di-trans,octa-cis-undecaprenol + GDP + H(+). It catalyses the reaction N-acetyl-alpha-D-glucosaminyl-di-trans,octa-cis-undecaprenyl diphosphate + GDP-alpha-D-mannose = alpha-D-mannosyl-(1-&gt;3)-N-acetyl-alpha-D-glucosaminyl-di-trans,octa-cis-undecaprenyl diphosphate + GDP + H(+). The catalysed reaction is N-acetyl-alpha-D-galactosaminyl-di-trans,octa-cis-undecaprenyl diphosphate + GDP-alpha-D-mannose = alpha-D-mannosyl-(1-&gt;3)-N-acetyl-alpha-D-galctosaminyl-1-diphospho-di-trans,octa-cis-undecaprenol + GDP + H(+). It functions in the pathway lipopolysaccharide biosynthesis; LPS oligosaccharide biosynthesis. With respect to regulation, not activated by dithiothreitol (DTT) using GlcNAc-alpha-PO(3)-PO(3)-phenylundecyl (GlcNAc-PP-PhU) as acceptor substrate. 0.25% Triton X-100 and 0.125% NP-40 increases the activity 2.5-fold and 2-fold, respectively. 0.125% octyl glucoside has little effect on activity. Slightly increased activity with Mg(2+) and Pb(2+), while no effect with Mn(2+), Co(2+), Ni(2+), Cu(2+), Zn(2+), Ca(2+) or EDTA. Not inhibited by N-butyryl-galactosamine-alpha-benzyl or N-butyryl-glucosamine-beta-benzyl. Bis-imidazolium salts having aliphatic spacer groups with 4 or 6 carbons have little effect on activity, but spacer groups of 18-22 aliphatic carbons inhibit activity, with the most potent inhibitor being bis-imidazolium salt having a 20-carbon chain spacer length. Non-processive alpha-1,3-D-rhamnosyltransferase. Catalyzes the transfer of one D-rhamnose (D-Rha) residue from donor substrate GDP-D-Rha in alpha-1-3 linkage to both GlcNAc- and GalNAc-diphosphate-lipid acceptor substrates. Is also able to transfer D-mannose (D-Man) to these acceptors at a lower level. Nucleotide sugars GDP-D-Rha, GDP-Fuc, UDP-Gal, UDP-GalNAc, UDP-GlcNAc and CMP-sialic acid cannot act as donor substrates. Only compounds with a diphosphate as the aglycone group can act as acceptor substrates. No activity is detected with compounds containing a diphosphate mimic. Fluorescent undecyl-anthracenyl group-containing compounds, such as GlcNAc-PO(3)-PO(3)-AnthrU and GalNAc-PO(3)-PO(3)-AnthrU, are also good acceptor substrates. Involved in the biosynthesis of the common polysaccharide antigen (CPA), also called A band, which is one of the two major cell surface O-antigens of the P.aeruginosa lipopolysaccharide. Involved in susceptibility to antibiotic colistin. This is D-rhamnosyltransferase WbpZ from Pseudomonas aeruginosa (strain ATCC 15692 / DSM 22644 / CIP 104116 / JCM 14847 / LMG 12228 / 1C / PRS 101 / PAO1).